The following is a 430-amino-acid chain: tRNA-2-methylthio-N(6)-dimethylallyladenosine synthase (430 aa).

The MTTase N-terminal domain occupies 1-110; that stretch reads MKVHIFTYGC…VPDAVLNAKN (110 aa). Residues C10, C46, C75, C146, C150, and C153 each coordinate [4Fe-4S] cluster. Positions 132–363 constitute a Radical SAM core domain; the sequence is RSSNHHAWVT…LNLQKTINKE (232 aa). The 62-residue stretch at 366-427 folds into the TRAM domain; sequence KSYLGKEVEV…AGPLYGEIKK (62 aa).

Belongs to the methylthiotransferase family. MiaB subfamily. Monomer. [4Fe-4S] cluster is required as a cofactor.

It localises to the cytoplasm. It carries out the reaction N(6)-dimethylallyladenosine(37) in tRNA + (sulfur carrier)-SH + AH2 + 2 S-adenosyl-L-methionine = 2-methylsulfanyl-N(6)-dimethylallyladenosine(37) in tRNA + (sulfur carrier)-H + 5'-deoxyadenosine + L-methionine + A + S-adenosyl-L-homocysteine + 2 H(+). Its function is as follows. Catalyzes the methylthiolation of N6-(dimethylallyl)adenosine (i(6)A), leading to the formation of 2-methylthio-N6-(dimethylallyl)adenosine (ms(2)i(6)A) at position 37 in tRNAs that read codons beginning with uridine. The sequence is that of tRNA-2-methylthio-N(6)-dimethylallyladenosine synthase from Fervidobacterium nodosum (strain ATCC 35602 / DSM 5306 / Rt17-B1).